The primary structure comprises 899 residues: Protein suppressor of hairy wing (899 aa).

3 disordered regions span residues 1 to 33, 45 to 127, and 171 to 206; these read MSAQ…RTGT, AAVA…KKMD, and AKEN…AKRR. The span at 21–31 shows a compositional bias: basic and acidic residues; it reads SDGDKPKEKRT. The segment covering 45-55 has biased composition (low complexity); that stretch reads AAVASKGASVS. Polar residues-rich tracts occupy residues 67–83 and 102–111; these read KILN…STKG and RSSAPASSAV. Residues 183–198 are compositionally biased toward acidic residues; it reads VDEDDDDDDDDEDEGV. Residues 218–240 form a C2H2-type 1; atypical zinc finger; it reads HVCGKCYKTFRRVKSLKKHLEFC. The segment at 288 to 311 adopts a C2H2-type 2 zinc-finger fold; sequence INCPDCPKSFKTQTSYERHIFITH. A C2H2-type 3; atypical zinc finger spans residues 318–340; it reads YPCSICNAKLRSGALLKLHEQQH. 9 C2H2-type zinc fingers span residues 347 to 365, 379 to 401, 412 to 434, 440 to 462, 468 to 490, 496 to 518, 522 to 544, 552 to 576, and 594 to 617; these read FACK…LKCH, MSCK…LKQH, YMCH…IRTH, FDCD…RRYH, YTCT…MKRH, HKCN…SKTH, YACS…VKDH, FACT…AGDH, and TDCA…RSVH. Disordered stretches follow at residues 646–665, 702–734, and 865–899; these read EQKE…GSLI, PLEG…VVKK, and GDED…ESEA. Basic and acidic residues predominate over residues 874 to 899; the sequence is ETDKGKDREADNTDTDTREDAVESEA.

The protein resides in the nucleus. Functionally, component of the gypsy chromatin insulator complex which is required for the function of the gypsy chromatin insulator and other endogenous chromatin insulators. Chromatin insulators are regulatory elements which establish independent domains of transcriptional activity within eukaryotic genomes. Insulators have two defining properties; they can block the communication between an enhancer and a promoter when placed between them and can also buffer transgenes from position effect variegation (PEV). Insulators are proposed to structure the chromatin fiber into independent domains of differing transcriptional potential by promoting the formation of distinct chromatin loops. This chromatin looping may involve the formation of insulator bodies, where homotypic interactions between individual subunits of the insulator complex could promote the clustering of widely spaced insulators at the nuclear periphery. Within the gypsy insulator complex, this protein binds specifically to a region of the gypsy element located 3' of the 5' long terminal repeat (LTR), and may also mediate interaction with other endogenous insulators at sites distinct from those recognized by Cp190. Cooperates with pita and cliff to recruit Cp190 and regulate insulator function at the front-ultraabdominal (Fub) boundary. The protein is Protein suppressor of hairy wing (su(Hw)) of Drosophila virilis (Fruit fly).